Reading from the N-terminus, the 160-residue chain is MTAPDDTDRRLIAATQAGLPLDEAPYARIAAELGLTETQVITRLSILHAQGVIRRIAIAPNHYALGMIANGMSVWDVDDAQAEALGERIGALDFVTHCYLRPRAPVWRYNLFAMLHGQSRAEVEQKRAQVRALLGAACRADDILYSTRILKKTGLRLKDG.

This sequence belongs to the Ahb/Nir family. As to quaternary structure, forms a complex composed of NirDL, NirG and NirH. All proteins are required for the total conversion of siroheme to didecarboxysiroheme.

It catalyses the reaction siroheme + 2 H(+) = 12,18-didecarboxysiroheme + 2 CO2. The protein operates within porphyrin-containing compound metabolism. In terms of biological role, involved in heme d1 biosynthesis. Catalyzes the decarboxylation of siroheme into didecarboxysiroheme. Siroheme is probably decarboxylated to monodecarboxysiroheme, which is in turn decarboxylated to didecarboxysiroheme. The protein is Siroheme decarboxylase NirH subunit of Paracoccus pantotrophus (Thiosphaera pantotropha).